A 325-amino-acid chain; its full sequence is Aerobic respiration control sensor protein ArcB homolog (325 aa).

Topologically, residues 1–26 (MKNFKYFAQSYVDWVIRLGRLRFSLL) are cytoplasmic. Residues 27–47 (GVMILAVLALCTQILFSLFIV) form a helical membrane-spanning segment. Over 48–57 (HQISWVDIFR) the chain is Periplasmic. A helical membrane pass occupies residues 58–78 (SVTFGLLTAPFVIYFFTLLVE). At 79–325 (KLEHSRLDLS…AQLMGRGFNS (247 aa)) the chain is on the cytoplasmic side. Residues 128–325 (TISHEFRTPL…AQLMGRGFNS (198 aa)) enclose the Histidine kinase domain. Position 131 is a phosphohistidine; by autocatalysis (His-131).

It localises to the cell inner membrane. It carries out the reaction ATP + protein L-histidine = ADP + protein N-phospho-L-histidine.. In terms of biological role, member of the two-component regulatory system ArcB/ArcA. Activates ArcA by phosphorylation. This Haemophilus influenzae (strain ATCC 51907 / DSM 11121 / KW20 / Rd) protein is Aerobic respiration control sensor protein ArcB homolog (arcB).